The following is a 498-amino-acid chain: Lysine--tRNA ligase (498 aa).

Residues E401 and E408 each contribute to the Mg(2+) site.

This sequence belongs to the class-II aminoacyl-tRNA synthetase family. As to quaternary structure, homodimer. The cofactor is Mg(2+).

The protein localises to the cytoplasm. It catalyses the reaction tRNA(Lys) + L-lysine + ATP = L-lysyl-tRNA(Lys) + AMP + diphosphate. This chain is Lysine--tRNA ligase, found in Dehalococcoides mccartyi (strain ATCC BAA-2266 / KCTC 15142 / 195) (Dehalococcoides ethenogenes (strain 195)).